The sequence spans 849 residues: Disks large homolog 3 (849 aa).

Residues 32–101 (DWQVPDPYGP…GKSTPKLNGS (70 aa)) are disordered. Over residues 41–53 (PSGGNGASSGYGG) the composition is skewed to gly residues. Residues 57–69 (QTLPSQAGATPTP) show a composition bias toward polar residues. PDZ domains follow at residues 149–235 (EIVL…VRRR), 244–330 (EVNL…VAKP), and 404–484 (KIIL…AQYR). Serine 157 carries the post-translational modification Phosphoserine. One can recognise an SH3 domain in the interval 519–589 (KRSLYVRALF…PSKKRVEKKE (71 aa)). Residues 659–834 (ARPVIILGPM…IYNKIKQIIE (176 aa)) enclose the Guanylate kinase-like domain. Tyrosine 705 is modified (phosphotyrosine).

This sequence belongs to the MAGUK family. As to quaternary structure, interacts through its PDZ domains with NETO1, GRIN2B, SYNGAP1 and APC. Interacts through its first two PDZ domains with ERBB4. Interacts through its third PDZ domain with NLGN1, and probably with NLGN2 and NLGN3. Interacts through its guanylate kinase-like domain with DLGAP1, DLGAP2, DLGAP3 and DLGAP4. Interacts with FRMPD4 (via C-terminus). Interacts with LRFN1, LRFN2 and LRFN4. Interacts with FLTP. Interacts with GPR85. Interacts with DGKI (via PDZ-binding motif).

Functionally, required for learning most likely through its role in synaptic plasticity following NMDA receptor signaling. The polypeptide is Disks large homolog 3 (Dlg3) (Mus musculus (Mouse)).